The sequence spans 63 residues: Large ribosomal subunit protein uL29 (63 aa).

Belongs to the universal ribosomal protein uL29 family.

The polypeptide is Large ribosomal subunit protein uL29 (Klebsiella pneumoniae (strain 342)).